A 238-amino-acid polypeptide reads, in one-letter code: uncharacterized protein (238 aa).

This is an uncharacterized protein from Ictaluridae (bullhead catfishes).